The primary structure comprises 450 residues: UDP-N-acetylmuramoylalanine--D-glutamate ligase (450 aa).

ATP is bound at residue glycine 115 to threonine 121.

It belongs to the MurCDEF family.

The protein resides in the cytoplasm. It catalyses the reaction UDP-N-acetyl-alpha-D-muramoyl-L-alanine + D-glutamate + ATP = UDP-N-acetyl-alpha-D-muramoyl-L-alanyl-D-glutamate + ADP + phosphate + H(+). The protein operates within cell wall biogenesis; peptidoglycan biosynthesis. Functionally, cell wall formation. Catalyzes the addition of glutamate to the nucleotide precursor UDP-N-acetylmuramoyl-L-alanine (UMA). The chain is UDP-N-acetylmuramoylalanine--D-glutamate ligase from Syntrophotalea carbinolica (strain DSM 2380 / NBRC 103641 / GraBd1) (Pelobacter carbinolicus).